Consider the following 579-residue polypeptide: Aspartate--tRNA(Asp/Asn) ligase (579 aa).

Position 171 (Glu-171) interacts with L-aspartate. An aspartate region spans residues 195-198 (QLFK). Arg-217 is a binding site for L-aspartate. Residues 217 to 219 (RDE) and Gln-226 each bind ATP. L-aspartate is bound at residue His-444. Glu-475 contributes to the ATP binding site. Arg-482 contributes to the L-aspartate binding site. 527–530 (GLDR) is an ATP binding site.

The protein belongs to the class-II aminoacyl-tRNA synthetase family. Type 1 subfamily. In terms of assembly, homodimer.

It localises to the cytoplasm. It carries out the reaction tRNA(Asx) + L-aspartate + ATP = L-aspartyl-tRNA(Asx) + AMP + diphosphate. In terms of biological role, aspartyl-tRNA synthetase with relaxed tRNA specificity since it is able to aspartylate not only its cognate tRNA(Asp) but also tRNA(Asn). Reaction proceeds in two steps: L-aspartate is first activated by ATP to form Asp-AMP and then transferred to the acceptor end of tRNA(Asp/Asn). The sequence is that of Aspartate--tRNA(Asp/Asn) ligase from Thermotoga maritima (strain ATCC 43589 / DSM 3109 / JCM 10099 / NBRC 100826 / MSB8).